The sequence spans 331 residues: Syntaxin-43 (331 aa).

Residues 1-305 (MATRNRTLLF…KAERTQRQGG (305 aa)) are Cytoplasmic-facing. 2 disordered regions span residues 20-45 (VRAPMGSSSSSTLTEHNSLTGAKSGL) and 59-80 (PNRSYAPVSTEDPGNSSRGTIT). Residues 31 to 40 (TLTEHNSLTG) show a composition bias toward polar residues. The stretch at 124 to 154 (KEDQHQIETLTQEVTFLLKKSEKQLQRLSAA) forms a coiled coil. Residues 235–297 (EEISIEREKE…DDGLKQLQKA (63 aa)) form the t-SNARE coiled-coil homology domain. The helical; Anchor for type IV membrane protein transmembrane segment at 306–326 (MVMCASVLVILCFIMLVLLIL) threads the bilayer. Over 327–331 (KEILL) the chain is Vesicular.

It belongs to the syntaxin family. Part of the t-SNARE complex. As to expression, expressed at low levels in roots, stems, flowers and leaves.

The protein localises to the golgi apparatus. It is found in the trans-Golgi network membrane. Its function is as follows. Contributes to the regulation of secretory and vacuolar transport pathways in the post-Golgi network, and to the maintenance of the Golgi apparatus and trans-Golgi network (TGN) morphologies. Vesicle trafficking protein that functions in the secretory pathway and mediates liposome fusion. Required for extracellular resistance responses to a fungal pathogen. Also involved in the protection of chloroplasts from salicylic acid-dependent biotic stress. The sequence is that of Syntaxin-43 from Arabidopsis thaliana (Mouse-ear cress).